The primary structure comprises 247 residues: Serine protease 1 (247 aa).

The first 15 residues, 1–15 (MNPLLILTFVAAALA), serve as a signal peptide directing secretion. Residues 16-23 (APFDDDDK) constitute a propeptide, activation peptide. The Peptidase S1 domain maps to 24 to 244 (IVGGYNCEEN…YVKWIKNTIA (221 aa)). 5 disulfide bridges follow: Cys30/Cys160, Cys48/Cys64, Cys139/Cys206, Cys171/Cys185, and Cys196/Cys220. Catalysis depends on His63, which acts as the Charge relay system. Positions 75, 77, 80, and 85 each coordinate Ca(2+). The Charge relay system role is filled by Asp107. Position 154 is a sulfotyrosine (Tyr154). Ser200 (charge relay system) is an active-site residue.

Belongs to the peptidase S1 family. Interacts with SERPINA1. Ca(2+) is required as a cofactor. Post-translationally, occurs in a single-chain form and a two-chain form, produced by proteolytic cleavage after Arg-122. In terms of processing, sulfation at Tyr-154 increases selectivity towards basic versus apolar residues at the P2' position of inhibitors that bind in a substrate-like fashion. Although the increase in selectivity is relatively small, it may facilitate digestion of a broader range of dietary proteins.

Its subcellular location is the secreted. It is found in the extracellular space. It carries out the reaction Preferential cleavage: Arg-|-Xaa, Lys-|-Xaa.. Its function is as follows. Has activity against the synthetic substrates Boc-Phe-Ser-Arg-Mec, Boc-Leu-Thr-Arg-Mec, Boc-Gln-Ala-Arg-Mec and Boc-Val-Pro-Arg-Mec. The single-chain form is more active than the two-chain form against all of these substrates. The chain is Serine protease 1 from Homo sapiens (Human).